Reading from the N-terminus, the 550-residue chain is MSYRDNEYSGNYNGKEDGYNSRGRYGGGYRNNYSRGGGRGGFNDGASYGYDQRGQGRNFYESDGPGANLVKKDWKNETLIPFQKDFYKEHENVRNRSDAEVTEYRKEKEIVVHGLNVPKPVTTFEEAGFPNYVLKEVKQLGFEAPTPIQQQAWPMAMSGRDMVGISATGSGKTLSYCLPAIVHINAQPLLSPGDGPIVLVLAPTRELAVQIQQECTKFGKSSRIRNTCVYGGVPRGPQIRDLIRGVEICIATPGRLLDMLDSNKTNLRRVTYLVLDEADRMLDMGFEPQIRKIVDQIRPDRQTVMFSATWPKEVQRLARDYLNDYIQVTVGSLDLAASHNIKQIVEVVDNADKRARLGKDIEEVLKDRDNKVLIFTGTKRVADDITRFLRQDGWPALAIHGDKAQDERDWVLNEFRTGKSPIMVATDVASRGIDVKGITHVFNYDFPGNTEDYVHRIGRTGRAGAKGTAYTYFTSDNAKQARELVSILSEAKQDIDPKLEEMARYSSGGRGGNYRRGGYGRGGFRRGGGYGNRNRGFTGSNSAPLARSRW.

Residues 1–25 are disordered; that stretch reads MSYRDNEYSGNYNGKEDGYNSRGRY. Residues 122–150 carry the Q motif motif; it reads TTFEEAGFPNYVLKEVKQLGFEAPTPIQQ. The 176-residue stretch at 153–328 folds into the Helicase ATP-binding domain; the sequence is WPMAMSGRDM…RDYLNDYIQV (176 aa). Residue 166–173 coordinates ATP; the sequence is SATGSGKT. Positions 276 to 279 match the DEAD box motif; the sequence is DEAD. The region spanning 340–503 is the Helicase C-terminal domain; the sequence is NIKQIVEVVD…DIDPKLEEMA (164 aa). The RNA-binding RGG-box stretch occupies residues 510 to 533; sequence RGGNYRRGGYGRGGFRRGGGYGNR. Residues 525–550 are disordered; that stretch reads RRGGGYGNRNRGFTGSNSAPLARSRW.

Belongs to the DEAD box helicase family. DDX5/DBP2 subfamily. Associates with polysomes.

The protein localises to the cytoplasm. It is found in the nucleus. The enzyme catalyses ATP + H2O = ADP + phosphate + H(+). Functionally, ATP-dependent RNA helicase involved nonsense-mediated mRNA decay and ribosome biogenesis through rRNA processing. The chain is ATP-dependent RNA helicase dbp2 (dbp2) from Schizosaccharomyces pombe (strain 972 / ATCC 24843) (Fission yeast).